Consider the following 199-residue polypeptide: Recombination protein RecR (199 aa).

The C4-type zinc-finger motif lies at 57–72 (CSICFNLTDTDPCAIC). The 96-residue stretch at 80 to 175 (RLLMVVEEAK…KVTRIAHGLP (96 aa)) folds into the Toprim domain.

The protein belongs to the RecR family.

In terms of biological role, may play a role in DNA repair. It seems to be involved in an RecBC-independent recombinational process of DNA repair. It may act with RecF and RecO. In Carboxydothermus hydrogenoformans (strain ATCC BAA-161 / DSM 6008 / Z-2901), this protein is Recombination protein RecR.